We begin with the raw amino-acid sequence, 438 residues long: Glutamyl-tRNA reductase (438 aa).

Residues 49–52 (TCNR), S109, 114–116 (EGQ), and Q120 contribute to the substrate site. The Nucleophile role is filled by C50. 198–203 (GAGRMS) is an NADP(+) binding site.

The protein belongs to the glutamyl-tRNA reductase family. In terms of assembly, homodimer.

The enzyme catalyses (S)-4-amino-5-oxopentanoate + tRNA(Glu) + NADP(+) = L-glutamyl-tRNA(Glu) + NADPH + H(+). It participates in porphyrin-containing compound metabolism; protoporphyrin-IX biosynthesis; 5-aminolevulinate from L-glutamyl-tRNA(Glu): step 1/2. It functions in the pathway porphyrin-containing compound metabolism; chlorophyll biosynthesis. Catalyzes the NADPH-dependent reduction of glutamyl-tRNA(Glu) to glutamate 1-semialdehyde (GSA). The polypeptide is Glutamyl-tRNA reductase (Synechococcus sp. (strain WH7803)).